The following is a 314-amino-acid chain: Ferrochelatase (314 aa).

Residues H184 and E259 each contribute to the Fe cation site.

This sequence belongs to the ferrochelatase family.

It localises to the cytoplasm. It catalyses the reaction heme b + 2 H(+) = protoporphyrin IX + Fe(2+). Its pathway is porphyrin-containing compound metabolism; protoheme biosynthesis; protoheme from protoporphyrin-IX: step 1/1. Functionally, catalyzes the ferrous insertion into protoporphyrin IX. The protein is Ferrochelatase of Chlamydia trachomatis serovar L2 (strain ATCC VR-902B / DSM 19102 / 434/Bu).